Here is a 255-residue protein sequence, read N- to C-terminus: Small ribosomal subunit protein eS1 (255 aa).

A compositionally biased stretch (basic residues) spans 1 to 18 (MAVGKNKRLSKGKKGLKK). A disordered region spans residues 1–28 (MAVGKNKRLSKGKKGLKKRTQDPFSRKD). Ala-2 is modified (N-acetylalanine; partial). Over residues 19 to 28 (RTQDPFSRKD) the composition is skewed to basic and acidic residues.

This sequence belongs to the eukaryotic ribosomal protein eS1 family. As to quaternary structure, component of the small ribosomal subunit. Mature ribosomes consist of a small (40S) and a large (60S) subunit. The 40S subunit contains about 33 different proteins and 1 molecule of RNA (18S). The 60S subunit contains about 49 different proteins and 3 molecules of RNA (25S, 5.8S and 5S).

The protein localises to the cytoplasm. This chain is Small ribosomal subunit protein eS1, found in Ajellomyces capsulatus (strain G186AR / H82 / ATCC MYA-2454 / RMSCC 2432) (Darling's disease fungus).